Reading from the N-terminus, the 128-residue chain is Large ribosomal subunit protein bL21 (128 aa).

The segment at 104-128 (GKKPSVGPRPKRVKAEPAPAADAAE) is disordered. The segment covering 119-128 (EPAPAADAAE) has biased composition (low complexity).

It belongs to the bacterial ribosomal protein bL21 family. Part of the 50S ribosomal subunit. Contacts protein L20.

Its function is as follows. This protein binds to 23S rRNA in the presence of protein L20. The protein is Large ribosomal subunit protein bL21 of Rhodopseudomonas palustris (strain BisB5).